Consider the following 271-residue polypeptide: (+)-cis,trans-nepetalactol synthase NEPS1 (271 aa).

Residues G24–G30, D49–Q51, D72–V73, and N99 each bind NAD(+). 2 residues coordinate substrate: T154 and Y167. Residues Y167, K171, and V200–A205 contribute to the NAD(+) site. Y167 functions as the Proton acceptor in the catalytic mechanism.

It belongs to the short-chain dehydrogenases/reductases (SDR) family.

The enzyme catalyses (S)-8-oxocitronellyl enol = cis-trans-nepetalactol. It catalyses the reaction cis-cis-nepetalactol + NAD(+) = cis-cis-nepetalactone + NADH + H(+). It carries out the reaction cis-trans-nepetalactol + NAD(+) = cis-trans-nepetalactone + NADH + H(+). Its function is as follows. Bifunctional enzyme that possesses cyclase and dehydrogenase activities. Functions as a non-oxidoreductive cyclase to promote the formation of cis-trans-nepetalactol. Functions as dehydrogenase to oxidize cis-cis-nepetalactol and cis-trans-nepetalactol into nepetalactones, metabolites that are both insect-repellent and have euphoric effect in cats. Binds NAD(+) as classical short-chain dehydrogenase/reductase (SDR), but does not utilize it for its redox-neutral cyclase activity. This is (+)-cis,trans-nepetalactol synthase NEPS1 from Nepeta racemosa (Catmint).